We begin with the raw amino-acid sequence, 197 residues long: CASP-like protein 1B1 (197 aa).

Ala-2 bears the N-acetylalanine mark. Topologically, residues Ala-2–Lys-17 are cytoplasmic. The helical transmembrane segment at Ile-18 to Gly-38 threads the bilayer. Residues Leu-39–Ala-69 are Extracellular-facing. Residues Phe-70 to Leu-90 traverse the membrane as a helical segment. The Cytoplasmic portion of the chain corresponds to Gln-91–Ser-106. The helical transmembrane segment at Val-107 to Phe-127 threads the bilayer. The Extracellular segment spans residues Met-128 to Ala-156. A helical transmembrane segment spans residues Gly-157–Ile-177. Residues Ser-178 to Pro-197 are Cytoplasmic-facing.

It belongs to the Casparian strip membrane proteins (CASP) family. As to quaternary structure, homodimer and heterodimers.

It is found in the cell membrane. The polypeptide is CASP-like protein 1B1 (Arabidopsis thaliana (Mouse-ear cress)).